We begin with the raw amino-acid sequence, 177 residues long: Interleukin-1 receptor antagonist protein (177 aa).

The N-terminal stretch at 1 to 25 (MEIRRRSVRHLISLLLFLFYSETAC) is a signal peptide. A disulfide bridge connects residues C91 and C141. N109 is a glycosylation site (N-linked (GlcNAc...) asparagine).

The protein belongs to the IL-1 family.

It localises to the secreted. Its function is as follows. Anti-inflammatory antagonist of interleukin-1 family of proinflammatory cytokines such as interleukin-1beta/IL1B and interleukin-1alpha/IL1A. Protects from immune dysregulation and uncontrolled systemic inflammation triggered by IL1 for a range of innate stimulatory agents such as pathogens. The chain is Interleukin-1 receptor antagonist protein (IL1RN) from Equus caballus (Horse).